We begin with the raw amino-acid sequence, 214 residues long: RING-H2 finger protein ATL67 (214 aa).

The chain crosses the membrane as a helical span at residues 33–53 (LGFGYSIAIALGFLVLLSTVL). The RING-type; atypical zinc finger occupies 138-180 (CSICLCEYKEAEMLRMMPECKHYFHLCCLDAWLKLNGSCPVCR).

It belongs to the RING-type zinc finger family. ATL subfamily.

It is found in the membrane. The catalysed reaction is S-ubiquitinyl-[E2 ubiquitin-conjugating enzyme]-L-cysteine + [acceptor protein]-L-lysine = [E2 ubiquitin-conjugating enzyme]-L-cysteine + N(6)-ubiquitinyl-[acceptor protein]-L-lysine.. The protein operates within protein modification; protein ubiquitination. This chain is RING-H2 finger protein ATL67 (ATL67), found in Arabidopsis thaliana (Mouse-ear cress).